We begin with the raw amino-acid sequence, 297 residues long: Small ribosomal subunit protein uS2 (297 aa).

The disordered stretch occupies residues 252-297; that stretch reads GVPGTAFSAATAAPTSWEADGGDWAASSAAPAGESWAETQPAEAKW. The span at 256-289 shows a compositional bias: low complexity; sequence TAFSAATAAPTSWEADGGDWAASSAAPAGESWAE.

This sequence belongs to the universal ribosomal protein uS2 family. In terms of assembly, component of the small ribosomal subunit. Mature ribosomes consist of a small (40S) and a large (60S) subunit. The 40S subunit contains about 33 different proteins and 1 molecule of RNA (18S). The 60S subunit contains about 49 different proteins and 3 molecules of RNA (25S, 5.8S and 5S). Interacts with rps21.

The protein localises to the cytoplasm. Functionally, required for the assembly and/or stability of the 40S ribosomal subunit. Required for the processing of the 20S rRNA-precursor to mature 18S rRNA in a late step of the maturation of 40S ribosomal subunits. The chain is Small ribosomal subunit protein uS2 (rps0) from Aspergillus fumigatus (strain CBS 144.89 / FGSC A1163 / CEA10) (Neosartorya fumigata).